The sequence spans 278 residues: uncharacterized protein (278 aa).

10 helical membrane passes run 1–21 (MLEILMSLTAAICWAFNGIAY), 30–50 (AFTANFHRTLFATVYFLPLAL), 56–76 (VVIDLQTALVLVISAMLSFYI), 92–112 (IALPASSTYPVYVVLLSTVIY), 116–136 (LSLNALISAILVFVAVYIIYG), 146–166 (LFYALLAAFSWALAILTLDFL), 170–190 (LPVSIVAFVRLLLCLILLSFT), 209–229 (GIFLLLGIMLFITAIKVSSSW), 230–250 (NVVQPSSTSPVFAAIFGAIFL), and 258–278 (LVAGIFVIILAILLLLLPPLQ). 2 EamA domains span residues 12 to 136 (ICWA…IIYG) and 154 to 274 (FSWA…LLLL).

The protein belongs to the EamA transporter family.

It is found in the cell membrane. This is an uncharacterized protein from Archaeoglobus fulgidus (strain ATCC 49558 / DSM 4304 / JCM 9628 / NBRC 100126 / VC-16).